The chain runs to 954 residues: MTDRIELTTANEFIARHIGPRAADELAMLQTLGFDSIEALSESVIPESIKGTSVLNLPAGQSEADALASIKAIASKNQLFKTYIGQGYYNTHTPAPILRNLLENPAWYTAYTPYQPEISQGRLESLLNFQTLISDLTGLPIANASLLDEATAAAEAMTFCKRLSKNKASQQFFASSHCHPQTLDVLRTRAEPLGITVVVADEHELGDVSDYFGALLQYPASNGDVFDYRELVERFHAANALVAVAADLLALTLLTPPGEFGADVAIGSAQRFGVPLGFGGPHAAYFSTRDAFKRDMPGRLVGVSVDRHGKQALRLAMQTREQHIRREKATSNICTAQVLLANIASMYAVYHGPRGLTQIANRVHQLTAILAEGLSTLGLNAEQAFFFDSLTLHTGDRTAALHAAARARHINLREIDDQRLGLSLDETTSQSAVETLWAIFANDGQSLPDFAALADSVQSRLPAGLLRQSAILSHPVFNRYHSETELMRYLRKLADKDLALDRTMIPLGSCTMKLNAASEMIPVTWAEFGNLHPFAPAEQSAGYQQLTDELEAMLCAATGYDAISLQPNAGSQGEYAGLLAIRAYHQSRGDEHRDICLIPSSAHGTNPATANMAGMRVVVTACDARGNVDIEDLRAKAVQHRDQLAAIMITYPSTHGVFEEGIREICGIVHDNGGQVYIDGANMNAMVGLCAPGKFGGDVSHLNLHKTFCIPHGGGGPGVGPIGVKSHLAPFMPGHARMERKEGAVCAAPFGSASILPITWMYIRMMGGEGLKRASQLAILNANYISRRLEEHYPVLYTGSNGLVAHECILDLRPIKDSSGISVDDVAKRLIDFGFHAPTMSFPVAGTLMIEPTESESREELDRFCDAMIKIREEIRAVENGTLDKDDNPLKNAPHTAAEIVGQWSHPYSREQAVYPVDSLIENKYWPPVGRVDNVFGDRNLVCACPSIENYQEA.

Residue Lys-706 is modified to N6-(pyridoxal phosphate)lysine.

Belongs to the GcvP family. The glycine cleavage system is composed of four proteins: P, T, L and H. Pyridoxal 5'-phosphate serves as cofactor.

The enzyme catalyses N(6)-[(R)-lipoyl]-L-lysyl-[glycine-cleavage complex H protein] + glycine + H(+) = N(6)-[(R)-S(8)-aminomethyldihydrolipoyl]-L-lysyl-[glycine-cleavage complex H protein] + CO2. Its function is as follows. The glycine cleavage system catalyzes the degradation of glycine. The P protein binds the alpha-amino group of glycine through its pyridoxal phosphate cofactor; CO(2) is released and the remaining methylamine moiety is then transferred to the lipoamide cofactor of the H protein. This chain is Glycine dehydrogenase (decarboxylating), found in Pseudomonas syringae pv. syringae (strain B728a).